Here is a 499-residue protein sequence, read N- to C-terminus: Replication factor C large subunit (499 aa).

50-57 contacts ATP; sequence GPPGVGKT. The tract at residues 428 to 499 is disordered; sequence EAERRVEAAE…QATLFDFLKK (72 aa). Positions 436-472 are enriched in acidic residues; sequence AEEEETMEAGEPEEELEEVEEEELTEEELEEAEEEIE. Residues 473-484 are compositionally biased toward basic and acidic residues; sequence TVGKKEKPEKEK.

Belongs to the activator 1 small subunits family. RfcL subfamily. Heteromultimer composed of small subunits (RfcS) and large subunits (RfcL).

Part of the RFC clamp loader complex which loads the PCNA sliding clamp onto DNA. The protein is Replication factor C large subunit of Thermococcus kodakarensis (strain ATCC BAA-918 / JCM 12380 / KOD1) (Pyrococcus kodakaraensis (strain KOD1)).